The primary structure comprises 231 residues: tRNA (guanine-N(1)-)-methyltransferase (231 aa).

S-adenosyl-L-methionine is bound by residues G112 and 132 to 137 (LGDFVL).

The protein belongs to the RNA methyltransferase TrmD family. In terms of assembly, homodimer.

The protein localises to the cytoplasm. It catalyses the reaction guanosine(37) in tRNA + S-adenosyl-L-methionine = N(1)-methylguanosine(37) in tRNA + S-adenosyl-L-homocysteine + H(+). In terms of biological role, specifically methylates guanosine-37 in various tRNAs. In Gloeothece citriformis (strain PCC 7424) (Cyanothece sp. (strain PCC 7424)), this protein is tRNA (guanine-N(1)-)-methyltransferase.